The sequence spans 67 residues: Conotoxin Cp1.1 (67 aa).

The N-terminal stretch at 1–26 (MMFRLTSVSCFLLVIACLNLFQVVLT) is a signal peptide. Intrachain disulfides connect C29/C43, C36/C48, C42/C52, and C47/C56. Position 60 is a tyrosine amide (Y60). The propeptide occupies 64–67 (ATFQ).

It belongs to the conotoxin I2 superfamily. Expressed by the venom duct.

It localises to the secreted. This Conus capitaneus (Captain cone) protein is Conotoxin Cp1.1.